The sequence spans 147 residues: uncharacterized protein (147 aa).

This sequence belongs to the limonene-1,2-epoxide hydrolase family.

This is an uncharacterized protein from Bacillus subtilis (strain 168).